The sequence spans 280 residues: 3-deoxy-manno-octulosonate cytidylyltransferase (280 aa).

Belongs to the KdsB family.

Its subcellular location is the cytoplasm. The enzyme catalyses 3-deoxy-alpha-D-manno-oct-2-ulosonate + CTP = CMP-3-deoxy-beta-D-manno-octulosonate + diphosphate. The protein operates within nucleotide-sugar biosynthesis; CMP-3-deoxy-D-manno-octulosonate biosynthesis; CMP-3-deoxy-D-manno-octulosonate from 3-deoxy-D-manno-octulosonate and CTP: step 1/1. It functions in the pathway bacterial outer membrane biogenesis; lipopolysaccharide biosynthesis. Functionally, activates KDO (a required 8-carbon sugar) for incorporation into bacterial lipopolysaccharide in Gram-negative bacteria. The chain is 3-deoxy-manno-octulosonate cytidylyltransferase from Colwellia psychrerythraea (strain 34H / ATCC BAA-681) (Vibrio psychroerythus).